The sequence spans 362 residues: Diphosphomevalonate decarboxylase (362 aa).

(R)-5-diphosphomevalonate contacts are provided by residues 17-20, Arg72, 150-155, and Thr206; these read YWGK and SGSACR.

The protein belongs to the diphosphomevalonate decarboxylase family. Homodimer.

The catalysed reaction is (R)-5-diphosphomevalonate + ATP = isopentenyl diphosphate + ADP + phosphate + CO2. The protein operates within isoprenoid biosynthesis; isopentenyl diphosphate biosynthesis via mevalonate pathway; isopentenyl diphosphate from (R)-mevalonate: step 3/3. Its function is as follows. Diphosphomevalonate decarboxylase; part of the second module of ergosterol biosynthesis pathway that includes the middle steps of the pathway. MVD1 converts diphosphomevalonate into isopentenyl diphosphate. The second module is carried out in the vacuole and involves the formation of farnesyl diphosphate, which is also an important intermediate in the biosynthesis of ubiquinone, dolichol, heme and prenylated proteins. Activity by the mevalonate kinase ERG12 first converts mevalonate into 5-phosphomevalonate. 5-phosphomevalonate is then further converted to 5-diphosphomevalonate by the phosphomevalonate kinase ERG8. The diphosphomevalonate decarboxylase MVD then produces isopentenyl diphosphate. The isopentenyl-diphosphate delta-isomerase IDI1 then catalyzes the 1,3-allylic rearrangement of the homoallylic substrate isopentenyl (IPP) to its highly electrophilic allylic isomer, dimethylallyl diphosphate (DMAPP). Finally the farnesyl diphosphate synthase ERG20 catalyzes the sequential condensation of isopentenyl pyrophosphate with dimethylallyl pyrophosphate, and then with the resultant geranylpyrophosphate to the ultimate product farnesyl pyrophosphate. The chain is Diphosphomevalonate decarboxylase from Candida albicans (strain SC5314 / ATCC MYA-2876) (Yeast).